Here is a 156-residue protein sequence, read N- to C-terminus: Small ribosomal subunit protein uS7 (156 aa).

The protein belongs to the universal ribosomal protein uS7 family. In terms of assembly, part of the 30S ribosomal subunit. Contacts proteins S9 and S11.

Its function is as follows. One of the primary rRNA binding proteins, it binds directly to 16S rRNA where it nucleates assembly of the head domain of the 30S subunit. Is located at the subunit interface close to the decoding center, probably blocks exit of the E-site tRNA. The polypeptide is Small ribosomal subunit protein uS7 (Streptococcus pyogenes serotype M12 (strain MGAS2096)).